The chain runs to 844 residues: Translation elongation factor 2 (844 aa).

Residues 17–348 form the tr-type G domain; it reads RNIRNMSVIA…MIAIHLPSPV (332 aa). Residue 26 to 33 participates in GTP binding; that stretch reads AHVDHGKS. Phosphothreonine is present on residues Thr-57 and Thr-59. GTP contacts are provided by residues 162–165 and 219–221; these read NKMD and SGL. Residue Ser-488 is modified to Phosphoserine. His-701 carries the post-translational modification Diphthamide.

It belongs to the TRAFAC class translation factor GTPase superfamily. Classic translation factor GTPase family. EF-G/EF-2 subfamily. Post-translationally, phosphorylation by EF-2 kinase completely inactivates EF-2.

It is found in the cytoplasm. The enzyme catalyses GTP + H2O = GDP + phosphate + H(+). Catalyzes the GTP-dependent ribosomal translocation step during translation elongation. During this step, the ribosome changes from the pre-translocational (PRE) to the post-translocational (POST) state as the newly formed A-site-bound peptidyl-tRNA and P-site-bound deacylated tRNA move to the P and E sites, respectively. Catalyzes the coordinated movement of the two tRNA molecules, the mRNA and conformational changes in the ribosome. The protein is Translation elongation factor 2 of Bombyx mori (Silk moth).